The chain runs to 31 residues: Cytochrome b6-f complex subunit 6 (31 aa).

Residues 4–24 (VVSYLGILAAFALVTIGIFLV) form a helical membrane-spanning segment.

The protein belongs to the PetL family. In terms of assembly, the 4 large subunits of the cytochrome b6-f complex are cytochrome b6, subunit IV (17 kDa polypeptide, PetD), cytochrome f and the Rieske protein, while the 4 small subunits are PetG, PetL, PetM and PetN. The complex functions as a dimer.

It is found in the plastid. Its subcellular location is the chloroplast thylakoid membrane. In terms of biological role, component of the cytochrome b6-f complex, which mediates electron transfer between photosystem II (PSII) and photosystem I (PSI), cyclic electron flow around PSI, and state transitions. PetL is important for photoautotrophic growth as well as for electron transfer efficiency and stability of the cytochrome b6-f complex. The chain is Cytochrome b6-f complex subunit 6 from Mesostigma viride (Green alga).